The sequence spans 508 residues: MAWLVLLGLLLCMLGAGSGTSDLEGVLPPDPHNCPNKCVCAADVLSCAGRGLQDLPAALPATAAELDLSHNALKRLHPGWLAPLSRLRALYLGYNKLDVLGRGVFTNASGLRILDLSSNLLRRLRTYDLDGLEELEKLLLFNNRLMHLDLDAFQGLSMLSHLYLSCNELSSFSFNHLHGLGLTRLRTLDLSSNWLGHVSVPELAALPTFLKNRLYLHNNPLPCDCSLYHLLRRWHQRGLSALHDFEREYTCLAFKVAESRVRFFEHSRVFKNCSVAAAPGLELPEEELHTHVGQSLRLFCNTTVPAARVAWVSPKNELLVAPGSQDGSIAVLADGSLAIGRVQEQHAGLFVCLASGPRLHHNQTLEYNVSVHKPRPEPEAFNTGFTTLLGCIVGLVLVLLYLFAPPCRGCCRCCRRACRNRCWPRASSPLQELSAQSSVLSTTPPDAPSRKASVHKHVAFLEPGKKGLNGRVQLAVAEDFDLCNPMGLQLKAGSESASSTGSEGLMMS.

The first 19 residues, 1–19, serve as a signal peptide directing secretion; it reads MAWLVLLGLLLCMLGAGSG. Residues 20 to 383 are Extracellular-facing; that stretch reads TSDLEGVLPP…PRPEPEAFNT (364 aa). One can recognise an LRRNT domain in the interval 25–61; that stretch reads GVLPPDPHNCPNKCVCAADVLSCAGRGLQDLPAALPA. 2 disulfide bridges follow: cysteine 34-cysteine 40 and cysteine 38-cysteine 47. LRR repeat units lie at residues 62–83, 86–107, 110–131, 134–155, 158–178, and 184–207; these read TAAELDLSHNALKRLHPGWLAP, RLRALYLGYNKLDVLGRGVFTN, GLRILDLSSNLLRRLRTYDLDG, ELEKLLLFNNRLMHLDLDAFQG, MLSHLYLSCNELSSFSFNHLH, and RLRTLDLSSNWLGHVSVPELAALP. N-linked (GlcNAc...) asparagine glycosylation occurs at asparagine 107. Residues 219 to 275 enclose the LRRCT domain; it reads NPLPCDCSLYHLLRRWHQRGLSALHDFEREYTCLAFKVAESRVRFFEHSRVFKNCSV. 3 disulfide bridges follow: cysteine 223-cysteine 251, cysteine 225-cysteine 273, and cysteine 300-cysteine 352. Asparagine 272, asparagine 301, asparagine 362, and asparagine 368 each carry an N-linked (GlcNAc...) asparagine glycan. An Ig-like C2-type domain is found at 279 to 370; the sequence is PGLELPEEEL…HNQTLEYNVS (92 aa). Residues 384-404 form a helical membrane-spanning segment; sequence GFTTLLGCIVGLVLVLLYLFA. Over 405–508 the chain is Cytoplasmic; that stretch reads PPCRGCCRCC…STGSEGLMMS (104 aa).

It belongs to the immunoglobulin superfamily. AMIGO family. Binds AMIGO1 or AMIGO2.

Its subcellular location is the membrane. In terms of biological role, may mediate heterophilic cell-cell interaction. May contribute to signal transduction through its intracellular domain. This is Amphoterin-induced protein 3 from Rattus norvegicus (Rat).